Reading from the N-terminus, the 630-residue chain is Pro-interleukin-16 (630 aa).

2 disordered regions span residues 30–268 (ENPG…FPLT) and 316–343 (PKEG…ASDT). A compositionally biased stretch (low complexity) spans 129-143 (IRASSSSSIKQRISS). Serine 220 carries the phosphoserine modification. The segment covering 321–343 (SPTSSSNEDSAANGSAETSASDT) has biased composition (polar residues). The segment at 404 to 500 (KQLDSIHVTI…IVTRKLTAES (97 aa)) is interaction with PPP1R12A, PPP1R12B and PPP1R12C. PDZ domains lie at 410-495 (HVTI…VTRK) and 532-617 (TVTL…IRRK).

As to quaternary structure, homotetramer. Pro-interleukin-16 interacts (via PDZ 2 domain) with PPP1R12A, PPP1R12B and PPP1R12C. Pro-interleukin-16 interacts with GRIN2A. Pro-interleukin-16 interacts with GABPB1. Pro-interleukin-16 interacts (via PDZ 3 domain) with HDAC3.

The protein resides in the secreted. It localises to the cytoplasm. The protein localises to the nucleus. In terms of biological role, interleukin-16 stimulates a migratory response in CD4+ lymphocytes, monocytes, and eosinophils. Primes CD4+ T-cells for IL-2 and IL-15 responsiveness. Also induces T-lymphocyte expression of interleukin 2 receptor. Ligand for CD4. Functionally, pro-interleukin-16 is involved in cell cycle progression in T-cells. Appears to be involved in transcriptional regulation of SKP2 and is probably part of a transcriptional repression complex on the core promoter of the SKP2 gene. May act as a scaffold for GABPB1 (the DNA-binding subunit the GABP transcription factor complex) and HDAC3 thus maintaining transcriptional repression and blocking cell cycle progression in resting T-cells. The sequence is that of Pro-interleukin-16 (IL16) from Macaca fascicularis (Crab-eating macaque).